Consider the following 417-residue polypeptide: D-inositol 3-phosphate glycosyltransferase (417 aa).

H15 is a 1D-myo-inositol 3-phosphate binding site. UDP-N-acetyl-alpha-D-glucosamine-binding positions include 21–22 (QP) and G29. 1D-myo-inositol 3-phosphate is bound by residues 26–31 (DAGGMN), K84, Y117, T141, and R161. 3 residues coordinate UDP-N-acetyl-alpha-D-glucosamine: R241, K246, and V299. 3 residues coordinate Mg(2+): Y308, R309, and A311. UDP-N-acetyl-alpha-D-glucosamine contacts are provided by E321 and E329. Residue T335 participates in Mg(2+) binding.

The protein belongs to the glycosyltransferase group 1 family. MshA subfamily. Homodimer.

It catalyses the reaction 1D-myo-inositol 3-phosphate + UDP-N-acetyl-alpha-D-glucosamine = 1D-myo-inositol 2-acetamido-2-deoxy-alpha-D-glucopyranoside 3-phosphate + UDP + H(+). Catalyzes the transfer of a N-acetyl-glucosamine moiety to 1D-myo-inositol 3-phosphate to produce 1D-myo-inositol 2-acetamido-2-deoxy-glucopyranoside 3-phosphate in the mycothiol biosynthesis pathway. The chain is D-inositol 3-phosphate glycosyltransferase from Xylanimonas cellulosilytica (strain DSM 15894 / JCM 12276 / CECT 5975 / KCTC 9989 / LMG 20990 / NBRC 107835 / XIL07).